We begin with the raw amino-acid sequence, 276 residues long: 2-dehydro-3-deoxyphosphooctonate aldolase (276 aa).

This sequence belongs to the KdsA family.

The protein resides in the cytoplasm. The catalysed reaction is D-arabinose 5-phosphate + phosphoenolpyruvate + H2O = 3-deoxy-alpha-D-manno-2-octulosonate-8-phosphate + phosphate. It participates in carbohydrate biosynthesis; 3-deoxy-D-manno-octulosonate biosynthesis; 3-deoxy-D-manno-octulosonate from D-ribulose 5-phosphate: step 2/3. It functions in the pathway bacterial outer membrane biogenesis; lipopolysaccharide biosynthesis. The sequence is that of 2-dehydro-3-deoxyphosphooctonate aldolase from Xanthomonas euvesicatoria pv. vesicatoria (strain 85-10) (Xanthomonas campestris pv. vesicatoria).